Here is a 340-residue protein sequence, read N- to C-terminus: MTSLIRSNSWGSFVQTITSSSNRLYIGWFGLLVFPLLSLATVAYITAFFLAPAVDIDGIREPVAGSLIYGNNIISGAVIPSSNAIGVHFYPLWESLGLDEWLYNGGTYQFVVFHFFLGVCGWMGREWEFSYRLGMRPWIFVAFSAPIAAAAAVFIIYPIGQGSFSDGMPLGIQGTFNFMLVFQAEHKILMHPFHILGVAGVFGGSLFSAMHGSLVSSSLLAETAGSESLNNGYVFGQEDETYSISAAHAYFGRLIFQYASFNNSRSLHFFLAAWPVIGIWITSLGVATMAFNLNGFNFNQSILDESGHYINSWADILNRADLGIEVMHERNAHNFPLDLA.

3 consecutive transmembrane segments (helical) span residues 25–42 (YIGW…LATV), 114–129 (HFFL…EWEF), and 138–152 (WIFV…AAAA). His114 contacts chlorophyll a. Position 122 (Trp122) interacts with pheophytin a. Asp166 and Glu185 together coordinate [CaMn4O5] cluster. A helical membrane pass occupies residues 193–214 (FHILGVAGVFGGSLFSAMHGSL). His194 contacts chlorophyll a. A quinone is bound by residues His211 and 260–261 (SF). His211 serves as a coordination point for Fe cation. Fe cation is bound at residue His268. The helical transmembrane segment at 270 to 284 (FLAAWPVIGIWITSL) threads the bilayer. Positions 328, 329, 338, and 340 each coordinate [CaMn4O5] cluster.

This sequence belongs to the reaction center PufL/M/PsbA/D family. In terms of assembly, PSII is composed of 1 copy each of membrane proteins PsbA, PsbB, PsbC, PsbD, PsbE, PsbF, PsbH, PsbI, PsbJ, PsbK, PsbL, PsbM, PsbT, PsbX, PsbY, PsbZ, Psb30/Ycf12, at least 3 peripheral proteins of the oxygen-evolving complex and a large number of cofactors. It forms dimeric complexes. The cofactor is The D1/D2 heterodimer binds P680, chlorophylls that are the primary electron donor of PSII, and subsequent electron acceptors. It shares a non-heme iron and each subunit binds pheophytin, quinone, additional chlorophylls, carotenoids and lipids. D1 provides most of the ligands for the Mn4-Ca-O5 cluster of the oxygen-evolving complex (OEC). There is also a Cl(-1) ion associated with D1 and D2, which is required for oxygen evolution. The PSII complex binds additional chlorophylls, carotenoids and specific lipids.. Post-translationally, tyr-157 forms a radical intermediate that is referred to as redox-active TyrZ, YZ or Y-Z.

It is found in the plastid. It localises to the chloroplast thylakoid membrane. It carries out the reaction 2 a plastoquinone + 4 hnu + 2 H2O = 2 a plastoquinol + O2. Its function is as follows. Photosystem II (PSII) is a light-driven water:plastoquinone oxidoreductase that uses light energy to abstract electrons from H(2)O, generating O(2) and a proton gradient subsequently used for ATP formation. It consists of a core antenna complex that captures photons, and an electron transfer chain that converts photonic excitation into a charge separation. The D1/D2 (PsbA/PsbD) reaction center heterodimer binds P680, the primary electron donor of PSII as well as several subsequent electron acceptors. The polypeptide is Photosystem II protein D1 (Amphidinium carterae (Dinoflagellate)).